A 528-amino-acid chain; its full sequence is Protein spinster homolog 1 (528 aa).

The disordered stretch occupies residues 1–44 (MSGSDTAPFLSQADDTDDGPAPGTPGLPGSMGNPKSEDPAVPDQ). The next 12 helical transmembrane spans lie at 50 to 70 (ITGL…YINL), 98 to 118 (GLIQ…FGYL), 126 to 146 (YLMC…SFIP), 160 to 180 (VGVG…DLFV), 187 to 207 (MLSV…IAGS), 218 to 238 (WALR…FLVV), 278 to 298 (LGFT…PAFL), 323 to 343 (LIFG…GVEI), 357 to 377 (LVCA…LACA), 381 to 401 (IVAT…NWAI), 421 to 441 (FQIV…IGSI), and 465 to 485 (MLCA…AIFI). Ser518 is modified (phosphoserine).

It belongs to the major facilitator superfamily. Spinster (TC 2.A.1.49) family. In terms of assembly, interacts with BCL2 and BCL2L1.

It localises to the lysosome membrane. The catalysed reaction is a 1-acyl-sn-glycero-3-phosphocholine(out) + H(+)(out) = a 1-acyl-sn-glycero-3-phosphocholine(in) + H(+)(in). The enzyme catalyses 1-hexadecanoyl-sn-glycero-3-phosphocholine(out) + H(+)(out) = 1-hexadecanoyl-sn-glycero-3-phosphocholine(in) + H(+)(in). It catalyses the reaction 1-(9Z-octadecenoyl)-sn-glycero-3-phosphocholine(out) + H(+)(out) = 1-(9Z-octadecenoyl)-sn-glycero-3-phosphocholine(in) + H(+)(in). It carries out the reaction 1-(5Z,8Z,11Z,14Z-eicosatetraenoyl)-sn-glycero-3-phosphocholine(out) + H(+)(out) = 1-(5Z,8Z,11Z,14Z-eicosatetraenoyl)-sn-glycero-3-phosphocholine(in) + H(+)(in). The catalysed reaction is 1-(4Z,7Z,10Z,13Z,16Z,19Z-docosahexaenoyl)-sn-glycero-3-phosphocholine(out) + H(+)(out) = 1-(4Z,7Z,10Z,13Z,16Z,19Z-docosahexaenoyl)-sn-glycero-3-phosphocholine(in) + H(+)(in). The enzyme catalyses a 1-acyl-sn-glycero-3-phosphoethanolamine(out) + H(+)(out) = a 1-acyl-sn-glycero-3-phosphoethanolamine(in) + H(+)(in). It catalyses the reaction 1-(9Z-octadecenoyl)-sn-glycero-3-phosphoethanolamine(out) + H(+)(out) = 1-(9Z-octadecenoyl)-sn-glycero-3-phosphoethanolamine(in) + H(+)(in). It carries out the reaction 1-acyl-sn-glycero-3-phospho-(1'-sn-glycerol)(out) + H(+)(out) = 1-acyl-sn-glycero-3-phospho-(1'-sn-glycerol)(in) + H(+)(in). The catalysed reaction is 1-(9Z-octadecenoyl)-sn-glycero-3-phospho-(1'-sn-glycerol)(out) + H(+)(out) = 1-(9Z-octadecenoyl)-sn-glycero-3-phospho-(1'-sn-glycerol)(in) + H(+)(in). The enzyme catalyses a 1-O-(1Z-alkenyl)-sn-glycero-3-phosphocholine(out) + H(+)(out) = a 1-O-(1Z-alkenyl)-sn-glycero-3-phosphocholine(in) + H(+)(in). It catalyses the reaction 1-(1Z-hexadecenyl)-sn-glycero-3-phosphocholine(out) + H(+)(out) = 1-(1Z-hexadecenyl)-sn-glycero-3-phosphocholine(in) + H(+)(in). It carries out the reaction a 1-O-(1Z-alkenyl)-sn-glycero-3-phosphoethanolamine(out) + H(+)(out) = a 1-O-(1Z-alkenyl)-sn-glycero-3-phosphoethanolamine(in) + H(+)(in). The catalysed reaction is 1-O-(1Z-hexadecenyl)-sn-glycero-3-phosphoethanolamine(out) + H(+)(out) = 1-O-(1Z-hexadecenyl)-sn-glycero-3-phosphoethanolamine(in) + H(+)(in). Its function is as follows. Plays a critical role in the phospholipid salvage pathway from lysosomes to the cytosol. Mediates the rate-limiting, proton-dependent, lysosomal efflux of lysophospholipids, which can then be reacylated by acyltransferases in the endoplasmic reticulum to form phospholipids. Selective for zwitterionic headgroups such as lysophosphatidylcholine (LPC) and lysophosphatidylethanolamine (LPE), can also transport lysophosphatidylglycerol (LPG), but not other anionic lysophospholipids, sphingosine, nor sphingomyelin. Transports lysophospholipids with saturated, monounsaturated, and polyunsaturated fatty acids, such as 1-hexadecanoyl-sn-glycero-3-phosphocholine, 1-(9Z-octadecenoyl)-sn-glycero-3-phosphocholine and 1-(4Z,7Z,10Z,13Z,16Z,19Z-docosahexaenoyl)-sn-glycero-3-phosphocholine, respectively. Can also transport lysoplasmalogen (LPC with a fatty alcohol) such as 1-(1Z-hexadecenyl)-sn-glycero-3-phosphocholine. Essential player in lysosomal homeostasis. Crucial for cell survival under conditions of nutrient limitation. May be involved in necrotic or autophagic cell death. This chain is Protein spinster homolog 1 (SPNS1), found in Bos taurus (Bovine).